The sequence spans 140 residues: Large ribosomal subunit protein uL11 (140 aa).

The protein belongs to the universal ribosomal protein uL11 family. In terms of assembly, part of the ribosomal stalk of the 50S ribosomal subunit. Interacts with L10 and the large rRNA to form the base of the stalk. L10 forms an elongated spine to which L12 dimers bind in a sequential fashion forming a multimeric L10(L12)X complex. In terms of processing, one or more lysine residues are methylated.

Forms part of the ribosomal stalk which helps the ribosome interact with GTP-bound translation factors. The sequence is that of Large ribosomal subunit protein uL11 from Campylobacter hominis (strain ATCC BAA-381 / DSM 21671 / CCUG 45161 / LMG 19568 / NCTC 13146 / CH001A).